The sequence spans 466 residues: Membrane-bound lytic murein transglycosylase F (466 aa).

The signal sequence occupies residues 1–24 (MKRFKLNYFIIGLIAILLTWSLWT). The tract at residues 25–268 (TVPWRNAHQD…RLEEKYLGHV (244 aa)) is non-LT domain. The tract at residues 269-466 (GGFDYVDTKT…KEKKAAQLAD (198 aa)) is LT domain. Glu313 is a catalytic residue.

The protein in the N-terminal section; belongs to the bacterial solute-binding protein 3 family. In the C-terminal section; belongs to the transglycosylase Slt family.

The protein localises to the cell outer membrane. The enzyme catalyses Exolytic cleavage of the (1-&gt;4)-beta-glycosidic linkage between N-acetylmuramic acid (MurNAc) and N-acetylglucosamine (GlcNAc) residues in peptidoglycan, from either the reducing or the non-reducing ends of the peptidoglycan chains, with concomitant formation of a 1,6-anhydrobond in the MurNAc residue.. Murein-degrading enzyme that degrades murein glycan strands and insoluble, high-molecular weight murein sacculi, with the concomitant formation of a 1,6-anhydromuramoyl product. Lytic transglycosylases (LTs) play an integral role in the metabolism of the peptidoglycan (PG) sacculus. Their lytic action creates space within the PG sacculus to allow for its expansion as well as for the insertion of various structures such as secretion systems and flagella. The chain is Membrane-bound lytic murein transglycosylase F from Sodalis glossinidius (strain morsitans).